We begin with the raw amino-acid sequence, 123 residues long: uncharacterized protein (123 aa).

This is an uncharacterized protein from Bacillus subtilis (strain 168).